Consider the following 281-residue polypeptide: Microtubule-associated protein RP/EB family member 3 (281 aa).

In terms of domain architecture, Calponin-homology (CH) spans 14 to 116 (NLSRHDMLAW…FIQWFKKFFD (103 aa)). Disordered regions lie at residues 157-181 (VPQRTSPTGPKNMQTSGRLSNVAPP) and 260-281 (EGFAPPEDDEIEEHQQEDQDEY). The segment covering 158 to 175 (PQRTSPTGPKNMQTSGRL) has biased composition (polar residues). Phosphoserine is present on residues Ser-162 and Ser-176. Residues 194 to 264 (GGHEADAQIL…LYATEEGFAP (71 aa)) form the EB1 C-terminal domain. Residues 217–260 (DGLEKERDFYFSKLRDIELICQEHESENSPVISGIIGILYATEE) are APC-binding. A DCTN1-binding region spans residues 217–281 (DGLEKERDFY…EHQQEDQDEY (65 aa)). Positions 272–281 (EHQQEDQDEY) are enriched in basic and acidic residues.

It belongs to the MAPRE family. Homodimer. Heterodimer with MAPRE1. Binds monomeric and polymerized GTP-bound tubulin. Interacts with DCTN1 and SRCIN1. Binds to the C-terminal domain of APC. Interacts (via C-terminus) with CLIP1. Interacts with SLAIN2. Interacts with SLAIN1. Interacts with APC2. Interacts with AKAP9. Interacts with PDE4DIP isoform 2/MMG8/SMYLE; this interaction is required for its recruitment to the Golgi apparatus.

The protein localises to the cytoplasm. Its subcellular location is the cytoskeleton. Plus-end tracking protein (+TIP) that binds to the plus-end of microtubules and regulates the dynamics of the microtubule cytoskeleton. Promotes microtubule growth. May be involved in spindle function by stabilizing microtubules and anchoring them at centrosomes. Also acts as a regulator of minus-end microtubule organization: interacts with the complex formed by AKAP9 and PDE4DIP, leading to recruit CAMSAP2 to the Golgi apparatus, thereby tethering non-centrosomal minus-end microtubules to the Golgi, an important step for polarized cell movement. Promotes elongation of CAMSAP2-decorated microtubule stretches on the minus-end of microtubules. This chain is Microtubule-associated protein RP/EB family member 3 (Mapre3), found in Mus musculus (Mouse).